A 49-amino-acid polypeptide reads, in one-letter code: U3-plectoxin-Pt1a (49 aa).

5 disulfides stabilise this stretch: cysteine 2-cysteine 16, cysteine 9-cysteine 30, cysteine 15-cysteine 41, cysteine 32-cysteine 39, and cysteine 45-cysteine 49.

As to expression, expressed by the venom gland.

The protein resides in the secreted. Its function is as follows. Potent toxin that may paralyze and/or kill insect pests such as H.virescens (lepidoptera), S.exigua (beet armyworm) and M.sexta (tobacco hornworm). The sequence is that of U3-plectoxin-Pt1a from Plectreurys tristis (Spider).